Here is a 1184-residue protein sequence, read N- to C-terminus: von Willebrand factor A domain-containing protein 3A (1184 aa).

Residues 1-24 form the signal peptide; that stretch reads MKKYRKISIGCFAMATQTSHVFHG. Positions 40–62 are disordered; the sequence is GRDSKKPLKQKNMNGLGQNSDNG. Polar residues predominate over residues 50 to 62; the sequence is KNMNGLGQNSDNG. Residues 333-357 are a coiled coil; sequence TSRDMDELLAEIQKAQSLLSHVQAL. Residues 511 to 708 form the VWFA 1 domain; the sequence is RVVVLLDISA…SIMSEMEKAL (198 aa). Asparagine 709 carries N-linked (GlcNAc...) asparagine glycosylation. Positions 729-780 are disordered; that stretch reads LGSSALPKEKPKTLQLRSQPKKLCPPRPTVPLGARMSIKDDPDREKSPPLKS. Residues 765 to 776 are compositionally biased toward basic and acidic residues; it reads SIKDDPDREKSP. Residues 959–1131 enclose the VWFA 2 domain; it reads KVCILLDTSG…KIHSLLTKGF (173 aa).

The protein resides in the secreted. This chain is von Willebrand factor A domain-containing protein 3A (VWA3A), found in Homo sapiens (Human).